We begin with the raw amino-acid sequence, 165 residues long: uncharacterized protein (165 aa).

Residues 51–102 (KQAAVEPGARGGERPTGSQAGVTDTPDSAPFQRRSRAPRAREQAAQAGLNQK) form a disordered region. Polar residues predominate over residues 66–76 (TGSQAGVTDTP).

This is an uncharacterized protein from Mus musculus (Mouse).